A 239-amino-acid polypeptide reads, in one-letter code: Uracil-DNA glycosylase (239 aa).

Asp65 serves as the catalytic Proton acceptor.

This sequence belongs to the uracil-DNA glycosylase (UDG) superfamily. UNG family.

It localises to the cytoplasm. It carries out the reaction Hydrolyzes single-stranded DNA or mismatched double-stranded DNA and polynucleotides, releasing free uracil.. Its function is as follows. Excises uracil residues from the DNA which can arise as a result of misincorporation of dUMP residues by DNA polymerase or due to deamination of cytosine. In Levilactobacillus brevis (strain ATCC 367 / BCRC 12310 / CIP 105137 / JCM 1170 / LMG 11437 / NCIMB 947 / NCTC 947) (Lactobacillus brevis), this protein is Uracil-DNA glycosylase.